Here is a 2797-residue protein sequence, read N- to C-terminus: Nonribosomal peptide synthetase penN (2797 aa).

The interval 239–625 (SRPDHPAICA…ARKDSQVKIR (387 aa)) is adenylation 1. Positions 751–824 (TDTERHVHRF…DIVSLVRTAT (74 aa)) constitute a Carrier 1 domain. Residue Ser-785 is modified to O-(pantetheine 4'-phosphoryl)serine. The interval 830–856 (PSAGAEISRSDAPTESPATGSFEGSGY) is disordered. The condensation 1 stretch occupies residues 870–1299 (QSFSQARMWF…DIEIGSLLLT (430 aa)). Residues 1328 to 1731 (FHQQVAAHGD…GRMDQQVKIR (404 aa)) are adenylation 2. The interval 1857-1953 (LEIGTGTGMI…VIKQLIQLHD (97 aa)) is methyltransferase. In terms of domain architecture, Carrier 2 spans 2277–2351 (SFTDDIERAM…RLAGRVRGFR (75 aa)). Ser-2311 bears the O-(pantetheine 4'-phosphoryl)serine mark. A condensation 2 region spans residues 2516–2658 (YDGISLSSIL…VNRTLIRVQL (143 aa)).

It belongs to the NRP synthetase family.

It catalyses the reaction O-methyl-L-tyrosine + anthranilate + S-adenosyl-L-methionine + 2 ATP = (-)-4'-methoxycyclopeptine + 2 AMP + S-adenosyl-L-homocysteine + 2 diphosphate + 2 H(+). The catalysed reaction is anthranilate + L-phenylalanine + S-adenosyl-L-methionine + 2 ATP = cyclopeptine + 2 AMP + S-adenosyl-L-homocysteine + 2 diphosphate + 2 H(+). The protein operates within secondary metabolite biosynthesis. It participates in alkaloid biosynthesis. Its pathway is mycotoxin biosynthesis. Nonribosomal peptide synthetase; part of the gene cluster that mediates the biosynthesis of penigequinolones, potent insecticidal alkaloids that contain a highly modified 10-carbon prenyl group. The first stage is catalyzed by the nonribosomal peptide synthetase penN that condenses anthranilic acid and O-methyl-L-tyrosine to produce 4'-methoxycyclopeptin. 4'-methoxycyclopeptin is then converted to 4'-methoxydehydrocyclopeptin by the ketoglutarate-dependent dioxygenase penM through dehydrogenation to form a double bond between C-alpha and C-beta of the O-methyltyrosine side chain. PenM also converts its first product methoxydehydrocyclopeptin to 4'-methoxycyclopenin. The following conversion of 4'methoxycyclopenin into 4'-methoxyviridicatin is catalyzed by the cyclopenase penL. 4'-methoxyviridicatin is the precursor of quinolone natural products, and is further converted to quinolinone B. The prenyltransferase penI then catalyzes the canonical Friedel-Crafts alkylation of quinolinone B with dimethylallyl cation to yield dimethylallyl quinolone, which is subjected to FAD-dependent dehydrogenation by the FAD-linked oxidoreductase penH to yield conjugated aryl diene. The delta(3') double bond then serves as the site of the second alkylation with DMAPP catalyzed by the prenyltransferase penG to yield a carbenium ion intermediate, which can be attacked by H(2)O to yield a styrenyl quinolone containing a C3'-hydroxyprenyl chain, or undergo cyclization to yield yaequinolones J1 and J2. The conversion of the styrenyl quinolone into the tetrahydrofuran-containing yaequinolone C is performed by the FAD-dependent monooxygenase penE and involves epoxidation of the terminal C7'-C8' olefin, followed by epoxide ring opening initiated by the C3' hydroxyl group. The predicted cysteine hydrolase penJ acts as an epoxide hydrolase that enhances the rate of the 5-exo-tet cyclization step, increasing the yield of yaequinolone C. PenF catalyzes the cationic rearrangement of the epoxide formed by penE (before ring opening to produce yaequinolone C) into yaequinolone D. Finally, the short-chain dehydrogenase/reductase (SDR)-like reductase penD, catalyzes both the dehydration of yaequinolone D and the reduction of the resulting oxonium to yield penigequinolone. This Penicillium thymicola protein is Nonribosomal peptide synthetase penN.